Consider the following 139-residue polypeptide: D-ribose pyranase (139 aa).

The active-site Proton donor is histidine 20. Substrate-binding positions include aspartate 28, histidine 106, and tyrosine 128 to asparagine 130.

This sequence belongs to the RbsD / FucU family. RbsD subfamily. As to quaternary structure, homodecamer.

The protein localises to the cytoplasm. It carries out the reaction beta-D-ribopyranose = beta-D-ribofuranose. Its pathway is carbohydrate metabolism; D-ribose degradation; D-ribose 5-phosphate from beta-D-ribopyranose: step 1/2. In terms of biological role, catalyzes the interconversion of beta-pyran and beta-furan forms of D-ribose. The chain is D-ribose pyranase from Actinobacillus pleuropneumoniae serotype 7 (strain AP76).